We begin with the raw amino-acid sequence, 180 residues long: Vacuolar ATPase assembly protein VMA22 (180 aa).

Residues 4-38 are a coiled coil; it reads QALREELDSKCLQLLSDLEELEAKRAALNARVEEG. The segment at 90 to 113 is disordered; it reads TPEEVGPSEASLRRRKGPTKTKEL.

Accessory component of the multisubunit proton-transporting vacuolar (V)-ATPase protein pump. Predominantly expressed in the heart, liver, kidney and testis and at lower levels in the brain and lung. Undetectable in the spleen and muscles.

The protein resides in the endosome. It is found in the lysosome. It localises to the endoplasmic reticulum-Golgi intermediate compartment. The protein localises to the cytoplasmic vesicle. Its subcellular location is the COPI-coated vesicle. The protein resides in the endoplasmic reticulum. Functionally, accessory component of the proton-transporting vacuolar (V)-ATPase protein pump involved in intracellular iron homeostasis. In aerobic conditions, required for intracellular iron homeostasis, thus triggering the activity of Fe(2+) prolyl hydroxylase (PHD) enzymes, and leading to HIF1A hydroxylation and subsequent proteasomal degradation. Necessary for endolysosomal acidification and lysosomal degradation. May be involved in Golgi homeostasis. This Mus musculus (Mouse) protein is Vacuolar ATPase assembly protein VMA22 (Vma22).